The chain runs to 143 residues: Phosphoribosyl-AMP cyclohydrolase (143 aa).

Residue D86 coordinates Mg(2+). A Zn(2+)-binding site is contributed by C87. D88 and D90 together coordinate Mg(2+). The Zn(2+) site is built by C103 and C110.

Belongs to the PRA-CH family. In terms of assembly, homodimer. Mg(2+) serves as cofactor. Zn(2+) is required as a cofactor.

Its subcellular location is the cytoplasm. The enzyme catalyses 1-(5-phospho-beta-D-ribosyl)-5'-AMP + H2O = 1-(5-phospho-beta-D-ribosyl)-5-[(5-phospho-beta-D-ribosylamino)methylideneamino]imidazole-4-carboxamide. It functions in the pathway amino-acid biosynthesis; L-histidine biosynthesis; L-histidine from 5-phospho-alpha-D-ribose 1-diphosphate: step 3/9. Catalyzes the hydrolysis of the adenine ring of phosphoribosyl-AMP. In Rhodospirillum rubrum (strain ATCC 11170 / ATH 1.1.1 / DSM 467 / LMG 4362 / NCIMB 8255 / S1), this protein is Phosphoribosyl-AMP cyclohydrolase.